The primary structure comprises 79 residues: Exodeoxyribonuclease 7 small subunit (79 aa).

The protein belongs to the XseB family. Heterooligomer composed of large and small subunits.

Its subcellular location is the cytoplasm. It catalyses the reaction Exonucleolytic cleavage in either 5'- to 3'- or 3'- to 5'-direction to yield nucleoside 5'-phosphates.. Functionally, bidirectionally degrades single-stranded DNA into large acid-insoluble oligonucleotides, which are then degraded further into small acid-soluble oligonucleotides. The sequence is that of Exodeoxyribonuclease 7 small subunit from Lactococcus lactis subsp. cremoris (strain SK11).